The sequence spans 174 residues: Ribosome maturation factor RimM (174 aa).

In terms of domain architecture, PRC barrel spans 101–174 (AGEFYLADLC…IELLQRWILE (74 aa)).

Belongs to the RimM family. Binds ribosomal protein uS19.

It is found in the cytoplasm. In terms of biological role, an accessory protein needed during the final step in the assembly of 30S ribosomal subunit, possibly for assembly of the head region. Essential for efficient processing of 16S rRNA. May be needed both before and after RbfA during the maturation of 16S rRNA. It has affinity for free ribosomal 30S subunits but not for 70S ribosomes. The chain is Ribosome maturation factor RimM from Treponema pallidum (strain Nichols).